Consider the following 324-residue polypeptide: Methionyl-tRNA formyltransferase (324 aa).

A (6S)-5,6,7,8-tetrahydrofolate-binding site is contributed by serine 112–proline 115.

Belongs to the Fmt family.

It catalyses the reaction L-methionyl-tRNA(fMet) + (6R)-10-formyltetrahydrofolate = N-formyl-L-methionyl-tRNA(fMet) + (6S)-5,6,7,8-tetrahydrofolate + H(+). In terms of biological role, attaches a formyl group to the free amino group of methionyl-tRNA(fMet). The formyl group appears to play a dual role in the initiator identity of N-formylmethionyl-tRNA by promoting its recognition by IF2 and preventing the misappropriation of this tRNA by the elongation apparatus. This is Methionyl-tRNA formyltransferase from Shewanella loihica (strain ATCC BAA-1088 / PV-4).